Reading from the N-terminus, the 562-residue chain is NAD-dependent malic enzyme (562 aa).

Residue Tyr101 is the Proton donor of the active site. Arg154 contacts NAD(+). The active-site Proton acceptor is Lys172. Residues Glu243, Asp244, and Asp267 each contribute to the a divalent metal cation site. The NAD(+) site is built by Asp267 and Asn415.

It belongs to the malic enzymes family. As to quaternary structure, homotetramer. The cofactor is Mg(2+). Mn(2+) is required as a cofactor.

It carries out the reaction (S)-malate + NAD(+) = pyruvate + CO2 + NADH. The catalysed reaction is oxaloacetate + H(+) = pyruvate + CO2. This Shewanella putrefaciens (strain CN-32 / ATCC BAA-453) protein is NAD-dependent malic enzyme.